Reading from the N-terminus, the 483-residue chain is Xylulose kinase (483 aa).

79 to 80 (MH) contacts substrate.

Belongs to the FGGY kinase family.

The enzyme catalyses D-xylulose + ATP = D-xylulose 5-phosphate + ADP + H(+). Its function is as follows. Catalyzes the phosphorylation of D-xylulose to D-xylulose 5-phosphate. The sequence is that of Xylulose kinase from Staphylococcus xylosus.